We begin with the raw amino-acid sequence, 286 residues long: 2-dehydro-3-deoxyphosphooctonate aldolase (286 aa).

It belongs to the KdsA family.

The protein resides in the cytoplasm. It carries out the reaction D-arabinose 5-phosphate + phosphoenolpyruvate + H2O = 3-deoxy-alpha-D-manno-2-octulosonate-8-phosphate + phosphate. It participates in carbohydrate biosynthesis; 3-deoxy-D-manno-octulosonate biosynthesis; 3-deoxy-D-manno-octulosonate from D-ribulose 5-phosphate: step 2/3. Its pathway is bacterial outer membrane biogenesis; lipopolysaccharide biosynthesis. The chain is 2-dehydro-3-deoxyphosphooctonate aldolase from Haemophilus ducreyi (strain 35000HP / ATCC 700724).